Reading from the N-terminus, the 33-residue chain is Beta-amanitin proprotein (33 aa).

Residues 1 to 10 (MSDINATRLP) constitute a propeptide that is removed on maturation. Residues 11-18 (IWGIGCDP) constitute a cross-link (cyclopeptide (Ile-Pro)). Positions 12 to 16 (WGIGC) form a cross-link, 2'-cysteinyl-6'-hydroxytryptophan sulfoxide (Trp-Cys). A propeptide spanning residues 19-33 (CVGDDVTAVLTRGEA) is cleaved from the precursor.

The protein belongs to the MSDIN fungal toxin family. In terms of processing, processed by the macrocyclase-peptidase enzyme POPB to yield a toxic cyclic decapeptide. POPB first removes 10 residues from the N-terminus. Conformational trapping of the remaining peptide forces the enzyme to release this intermediate rather than proceed to macrocyclization. The enzyme rebinds the remaining peptide in a different conformation and catalyzes macrocyclization of the N-terminal 8 residues.

Functionally, toxin belonging to the bicyclic octapeptides amatoxins that acts by binding non-competitively to RNA polymerase II and greatly slowing the elongation of transcripts from target promoters. In Amanita pallidorosea, this protein is Beta-amanitin proprotein.